The chain runs to 335 residues: tRNA N6-adenosine threonylcarbamoyltransferase (335 aa).

Fe cation is bound by residues H111 and H115. Substrate-binding positions include 133–137 (IISGG), D166, G179, D183, and N268. Position 296 (D296) interacts with Fe cation.

The protein belongs to the KAE1 / TsaD family. It depends on Fe(2+) as a cofactor.

It is found in the cytoplasm. The enzyme catalyses L-threonylcarbamoyladenylate + adenosine(37) in tRNA = N(6)-L-threonylcarbamoyladenosine(37) in tRNA + AMP + H(+). In terms of biological role, required for the formation of a threonylcarbamoyl group on adenosine at position 37 (t(6)A37) in tRNAs that read codons beginning with adenine. Is involved in the transfer of the threonylcarbamoyl moiety of threonylcarbamoyl-AMP (TC-AMP) to the N6 group of A37, together with TsaE and TsaB. TsaD likely plays a direct catalytic role in this reaction. The polypeptide is tRNA N6-adenosine threonylcarbamoyltransferase (Aquifex aeolicus (strain VF5)).